The primary structure comprises 387 residues: Succinate--CoA ligase [ADP-forming] subunit beta (387 aa).

One can recognise an ATP-grasp domain in the interval 9-244; it reads KRLLAEEGVP…STQQDGREIT (236 aa). Residues lysine 46, 53–55, glutamate 99, serine 102, and glutamate 107 each bind ATP; that span reads GRG. Mg(2+) is bound by residues asparagine 199 and aspartate 213. Residues asparagine 264 and 321–323 each bind substrate; that span reads GIT.

It belongs to the succinate/malate CoA ligase beta subunit family. Heterotetramer of two alpha and two beta subunits. Mg(2+) serves as cofactor.

It carries out the reaction succinate + ATP + CoA = succinyl-CoA + ADP + phosphate. It catalyses the reaction GTP + succinate + CoA = succinyl-CoA + GDP + phosphate. Its pathway is carbohydrate metabolism; tricarboxylic acid cycle; succinate from succinyl-CoA (ligase route): step 1/1. Its function is as follows. Succinyl-CoA synthetase functions in the citric acid cycle (TCA), coupling the hydrolysis of succinyl-CoA to the synthesis of either ATP or GTP and thus represents the only step of substrate-level phosphorylation in the TCA. The beta subunit provides nucleotide specificity of the enzyme and binds the substrate succinate, while the binding sites for coenzyme A and phosphate are found in the alpha subunit. In Acidithiobacillus ferrooxidans (strain ATCC 23270 / DSM 14882 / CIP 104768 / NCIMB 8455) (Ferrobacillus ferrooxidans (strain ATCC 23270)), this protein is Succinate--CoA ligase [ADP-forming] subunit beta.